A 286-amino-acid chain; its full sequence is 4-hydroxybenzoate octaprenyltransferase (286 aa).

7 helical membrane passes run 21-40 (GTLL…AGGM), 96-116 (LFVI…GLVV), 142-162 (FLGV…TGEV), 167-187 (WWLF…YAMV), 210-230 (QIIG…GWSA), 235-255 (LYGL…MLIF), and 266-286 (FLNN…DYLF).

This sequence belongs to the UbiA prenyltransferase family. Mg(2+) is required as a cofactor.

The protein localises to the cell inner membrane. The enzyme catalyses all-trans-octaprenyl diphosphate + 4-hydroxybenzoate = 4-hydroxy-3-(all-trans-octaprenyl)benzoate + diphosphate. Its pathway is cofactor biosynthesis; ubiquinone biosynthesis. Its function is as follows. Catalyzes the prenylation of para-hydroxybenzoate (PHB) with an all-trans polyprenyl group. Mediates the second step in the final reaction sequence of ubiquinone-8 (UQ-8) biosynthesis, which is the condensation of the polyisoprenoid side chain with PHB, generating the first membrane-bound Q intermediate 3-octaprenyl-4-hydroxybenzoate. The chain is 4-hydroxybenzoate octaprenyltransferase from Shewanella sp. (strain ANA-3).